Consider the following 132-residue polypeptide: Glycine cleavage system H protein (132 aa).

The region spanning 24–106 (IATIGLSAFA…YGDGWLIKVR (83 aa)) is the Lipoyl-binding domain. Lys-65 carries the N6-lipoyllysine modification.

Belongs to the GcvH family. As to quaternary structure, the glycine cleavage system is composed of four proteins: P, T, L and H. (R)-lipoate serves as cofactor.

In terms of biological role, the glycine cleavage system catalyzes the degradation of glycine. The H protein shuttles the methylamine group of glycine from the P protein to the T protein. In Rippkaea orientalis (strain PCC 8801 / RF-1) (Cyanothece sp. (strain PCC 8801)), this protein is Glycine cleavage system H protein.